Consider the following 400-residue polypeptide: GTPase Obg (400 aa).

The Obg domain maps to 1–159 (MKFVDEVQIR…RTLKLELLLL (159 aa)). Positions 160–333 (ADVGMLGLPN…VCYDILDLLD (174 aa)) constitute an OBG-type G domain. Residues 166-173 (GLPNAGKS), 191-195 (FTTLV), 213-216 (DIPG), 283-286 (NKMD), and 314-316 (TAI) contribute to the GTP site. Residues Ser-173 and Thr-193 each contribute to the Mg(2+) site.

The protein belongs to the TRAFAC class OBG-HflX-like GTPase superfamily. OBG GTPase family. Monomer. It depends on Mg(2+) as a cofactor.

The protein localises to the cytoplasm. Functionally, an essential GTPase which binds GTP, GDP and possibly (p)ppGpp with moderate affinity, with high nucleotide exchange rates and a fairly low GTP hydrolysis rate. Plays a role in control of the cell cycle, stress response, ribosome biogenesis and in those bacteria that undergo differentiation, in morphogenesis control. In Aeromonas hydrophila subsp. hydrophila (strain ATCC 7966 / DSM 30187 / BCRC 13018 / CCUG 14551 / JCM 1027 / KCTC 2358 / NCIMB 9240 / NCTC 8049), this protein is GTPase Obg.